A 705-amino-acid polypeptide reads, in one-letter code: DNA polymerase alpha subunit B (705 aa).

Residues 115 to 199 (KKRKLHGPFS…TPTTSRQNVP (85 aa)) are disordered. A compositionally biased stretch (polar residues) spans 125 to 134 (LSDSKQTYNV). At S126 the chain carries Phosphoserine. Residues 181–197 (STFQTPTTNTPTTSRQN) show a composition bias toward low complexity.

It belongs to the DNA polymerase alpha subunit B family. DNA polymerase alpha:primase is a four subunit enzyme complex, which is assembled throughout the cell cycle, and consists of the two DNA polymerase subunits A POL1 and B POL12, and the DNA primase large PRI2 and small PRI1 subunits. Subunit B POL12 binds to subunit A POL1. In terms of processing, phosphorylated in a cell cycle-dependent manner.

It is found in the nucleus. In terms of biological role, non-catalytic component of DNA polymerase alpha, which in a complex with DNA primase (DNA polymerase alpha:primase) constitutes a replicative polymerase. POL12 may play an essential role at the early stage of chromosomal DNA replication by coupling DNA polymerase alpha to the cellular replication machinery. Interacts with MCM10. This chain is DNA polymerase alpha subunit B (POL12), found in Saccharomyces cerevisiae (strain ATCC 204508 / S288c) (Baker's yeast).